The following is a 344-amino-acid chain: Uroporphyrinogen decarboxylase (344 aa).

Substrate contacts are provided by residues 23 to 27 (RQAGR), D73, Y149, T204, and H321.

It belongs to the uroporphyrinogen decarboxylase family. Homodimer.

It localises to the cytoplasm. It catalyses the reaction uroporphyrinogen III + 4 H(+) = coproporphyrinogen III + 4 CO2. It functions in the pathway porphyrin-containing compound metabolism; protoporphyrin-IX biosynthesis; coproporphyrinogen-III from 5-aminolevulinate: step 4/4. Its function is as follows. Catalyzes the decarboxylation of four acetate groups of uroporphyrinogen-III to yield coproporphyrinogen-III. This chain is Uroporphyrinogen decarboxylase, found in Francisella tularensis subsp. mediasiatica (strain FSC147).